The chain runs to 518 residues: Protein translocase subunit SecD (518 aa).

Transmembrane regions (helical) follow at residues 9-29, 361-381, 384-404, 406-426, 452-474, and 486-506; these read IFLS…NFMQ, LIGF…LGLF, IALS…QATL, LPGI…NVLI, FATI…IFGV, and IGII…IDIW.

It belongs to the SecD/SecF family. SecD subfamily. Forms a complex with SecF. Part of the essential Sec protein translocation apparatus which comprises SecA, SecYEG and auxiliary proteins SecDF-YajC and YidC.

Its subcellular location is the cell inner membrane. Functionally, part of the Sec protein translocase complex. Interacts with the SecYEG preprotein conducting channel. SecDF uses the proton motive force (PMF) to complete protein translocation after the ATP-dependent function of SecA. The chain is Protein translocase subunit SecD from Rickettsia conorii (strain ATCC VR-613 / Malish 7).